The primary structure comprises 245 residues: 1-(5-phosphoribosyl)-5-[(5-phosphoribosylamino)methylideneamino] imidazole-4-carboxamide isomerase (245 aa).

Residue D7 is the Proton acceptor of the active site. D129 acts as the Proton donor in catalysis.

This sequence belongs to the HisA/HisF family.

The protein localises to the cytoplasm. The enzyme catalyses 1-(5-phospho-beta-D-ribosyl)-5-[(5-phospho-beta-D-ribosylamino)methylideneamino]imidazole-4-carboxamide = 5-[(5-phospho-1-deoxy-D-ribulos-1-ylimino)methylamino]-1-(5-phospho-beta-D-ribosyl)imidazole-4-carboxamide. The protein operates within amino-acid biosynthesis; L-histidine biosynthesis; L-histidine from 5-phospho-alpha-D-ribose 1-diphosphate: step 4/9. The protein is 1-(5-phosphoribosyl)-5-[(5-phosphoribosylamino)methylideneamino] imidazole-4-carboxamide isomerase of Shewanella baltica (strain OS195).